Here is a 667-residue protein sequence, read N- to C-terminus: DNA ligase (667 aa).

NAD(+)-binding positions include 32–36 (DSEYD), 81–82 (SL), and E110. The N6-AMP-lysine intermediate role is filled by K112. NAD(+) is bound by residues R133, E167, K283, and K307. Residues C401, C404, C419, and C424 each contribute to the Zn(2+) site. The BRCT domain maps to 586 to 667 (EGHPEFSGKT…FVDKQNELNS (82 aa)).

It belongs to the NAD-dependent DNA ligase family. LigA subfamily. Mg(2+) serves as cofactor. Requires Mn(2+) as cofactor.

It catalyses the reaction NAD(+) + (deoxyribonucleotide)n-3'-hydroxyl + 5'-phospho-(deoxyribonucleotide)m = (deoxyribonucleotide)n+m + AMP + beta-nicotinamide D-nucleotide.. DNA ligase that catalyzes the formation of phosphodiester linkages between 5'-phosphoryl and 3'-hydroxyl groups in double-stranded DNA using NAD as a coenzyme and as the energy source for the reaction. It is essential for DNA replication and repair of damaged DNA. The chain is DNA ligase from Staphylococcus aureus (strain USA300).